The primary structure comprises 677 residues: Threonine--tRNA ligase (677 aa).

Residues 1 to 59 (MAQATISITVNGEAKEVEATTTGVELFAEDKNIIAVKINGENRDLYTPLNDGDTVDPIA) enclose the TGS domain. The segment at 255–561 (DHRKLGAEMD…LLEHYAGAFP (307 aa)) is catalytic. Residues Cys-360, His-411, and His-538 each coordinate Zn(2+).

Belongs to the class-II aminoacyl-tRNA synthetase family. As to quaternary structure, homodimer. Zn(2+) serves as cofactor.

The protein localises to the cytoplasm. It carries out the reaction tRNA(Thr) + L-threonine + ATP = L-threonyl-tRNA(Thr) + AMP + diphosphate + H(+). In terms of biological role, catalyzes the attachment of threonine to tRNA(Thr) in a two-step reaction: L-threonine is first activated by ATP to form Thr-AMP and then transferred to the acceptor end of tRNA(Thr). Also edits incorrectly charged L-seryl-tRNA(Thr). This chain is Threonine--tRNA ligase, found in Bifidobacterium longum (strain NCC 2705).